The chain runs to 509 residues: MNDDIIILLSVFCGIFFICFIICSSIALYLWKSKSRKRLVEQYTKEAKQAKKQILANGYKEISEAKMLFLKRSELEKNELDRVKEQLELRSNDLKRNQEIVESKSQRLDASLLDLEKRKFLLDKKEEYLIKILEDASGLTKSQAKELLIKQVKNKSEKELISILKNAELQAHSSSKMIANNIIISAMERIKVELTSQRTTNIVKLPSDDLKGRIIGKDGRNMKAFEQIGGVDIVVDETPNTVVVSSFNPIRREIATRTLEQLIIDGRIQPIKIENELKKQEQELEYIIQETGLSTIKELNINDIDIELVKLIGKLKFRTSYGQNVLAHSIEVAKLSGAIASELGLDVEKAIRAGLLHDIGKAIDFEKQGSHVVLGAEIAKKYNEDPIIINCIESHHEDKEKESEIAAIVAIADSISASRPGARYNAIDEFILRMTEIEKIGNSIPGVAKTYALQSGRQIRLIVNPLVASDLDLAMILEKMKEEIKNKVIIPGEITITVIRERKETDVLK.

A helical transmembrane segment spans residues Ile5 to Ser25. The KH domain maps to Thr199–Leu259. Positions Val325 to Ser418 constitute an HD domain.

Belongs to the RNase Y family.

The protein resides in the cell membrane. In terms of biological role, endoribonuclease that initiates mRNA decay. The chain is Ribonuclease Y from Mycoplasma mycoides subsp. mycoides SC (strain CCUG 32753 / NCTC 10114 / PG1).